The chain runs to 228 residues: MTIITPITNDPTTALLRLMAWLSPVFPAGSFSYSHGLERAVHDGLVVDAAGLQDWLQWLVRRGSGWNDAVLCAESWRCAMKGEDLHEIAELAEALAGSRERHMETMLQGGAFLAAARSWPCEIFDRLPPDCAYPVAVGAVAGGHGVPLAQALAAFLQAFCINLLQASIRLSVTGQSGVTAIMAALEPVLGETAARAALSSMEDLGSATFIADIMAMKHETQHSRLFRS.

It belongs to the UreF family. As to quaternary structure, ureD, UreF and UreG form a complex that acts as a GTP-hydrolysis-dependent molecular chaperone, activating the urease apoprotein by helping to assemble the nickel containing metallocenter of UreC. The UreE protein probably delivers the nickel.

Its subcellular location is the cytoplasm. Functionally, required for maturation of urease via the functional incorporation of the urease nickel metallocenter. The polypeptide is Urease accessory protein UreF (Brucella ovis (strain ATCC 25840 / 63/290 / NCTC 10512)).